The chain runs to 269 residues: NAD kinase (269 aa).

Aspartate 45 functions as the Proton acceptor in the catalytic mechanism. Residues 45 to 46, 122 to 123, arginine 149, aspartate 151, and alanine 186 each bind NAD(+); these read DG and NE.

The protein belongs to the NAD kinase family. Requires a divalent metal cation as cofactor.

It localises to the cytoplasm. The enzyme catalyses NAD(+) + ATP = ADP + NADP(+) + H(+). Its function is as follows. Involved in the regulation of the intracellular balance of NAD and NADP, and is a key enzyme in the biosynthesis of NADP. Catalyzes specifically the phosphorylation on 2'-hydroxyl of the adenosine moiety of NAD to yield NADP. This chain is NAD kinase, found in Staphylococcus carnosus (strain TM300).